A 1733-amino-acid polypeptide reads, in one-letter code: ATP-binding cassette sub-family A member 17 (1733 aa).

Transmembrane regions (helical) follow at residues 22–42 (TLIT…VLYL), 262–282 (FPLL…NSVL), 306–326 (AWFI…TVLF), 342–362 (TLIF…AFMM), 372–392 (GTVI…YITF), 403–423 (ILSC…ISLF), and 444–464 (FAQV…IAFL). Residues 519–752 (IEIQHLYKVF…YGAGYYMTII (234 aa)) form the ABC transporter 1 domain. An ATP-binding site is contributed by 555 to 562 (GHNGAGKT). The N-linked (GlcNAc...) asparagine glycan is linked to asparagine 609. 7 helical membrane-spanning segments follow: residues 906–926 (LVLS…LTFF), 1082–1102 (LVVN…ILTV), 1128–1148 (LLWD…VFLW), 1160–1180 (IPAV…LVYT), 1192–1212 (CVKL…LVTV), 1230–1250 (IFLI…YYNF), and 1287–1307 (IGKY…MLFL). An ABC transporter 2 domain is found at 1366 to 1599 (LVVKEVSKVY…FGISYSLQAK (234 aa)). Position 1401-1408 (1401-1408 (GLNGAGKT)) interacts with ATP. A compositionally biased stretch (polar residues) spans 1681-1692 (ESSTKEQIQQEQ). The segment at 1681–1733 (ESSTKEQIQQEQAVLASPSPPSNSRPISSPPSRLSSPTPKPLPSPPPSEPILL) is disordered. A compositionally biased stretch (low complexity) spans 1704–1717 (SRPISSPPSRLSSP). Pro residues predominate over residues 1718-1733 (TPKPLPSPPPSEPILL).

The protein belongs to the ABC transporter superfamily. ABCA family. N-glycosylated. In terms of tissue distribution, in the testis, detected predominantly in elongated spermatids at the late stage of germ cell development and in sperm, with no expression detected in immature germ cells such as spermatogonia and spermatocytes or in somatic cells such as Sertoli cells (at protein level). Expressed in the head and tail midpiece of elongated spermatids and sperm (at protein level). Expressed exclusively in the testis.

The protein localises to the endoplasmic reticulum membrane. Its subcellular location is the cytoplasm. It catalyses the reaction cholesterol(in) + ATP + H2O = cholesterol(out) + ADP + phosphate + H(+). Its function is as follows. Promotes cholesterol efflux from sperm which renders sperm capable of fertilization. Has also been shown to decrease levels of intracellular esterified neutral lipids including cholesteryl esters, fatty acid esters and triacylglycerols. The polypeptide is ATP-binding cassette sub-family A member 17 (Mus musculus (Mouse)).